Reading from the N-terminus, the 436-residue chain is 5-methylthioadenosine/S-adenosylhomocysteine deaminase (436 aa).

Zn(2+) is bound by residues His-66 and His-68. Substrate-binding residues include Glu-95, Arg-147, Arg-161, and His-187. His-214 provides a ligand contact to Zn(2+). The substrate site is built by Glu-217 and Asp-303. Asp-303 serves as a coordination point for Zn(2+).

It belongs to the metallo-dependent hydrolases superfamily. MTA/SAH deaminase family. Requires Zn(2+) as cofactor.

It carries out the reaction S-adenosyl-L-homocysteine + H2O + H(+) = S-inosyl-L-homocysteine + NH4(+). It catalyses the reaction S-methyl-5'-thioadenosine + H2O + H(+) = S-methyl-5'-thioinosine + NH4(+). Functionally, catalyzes the deamination of 5-methylthioadenosine and S-adenosyl-L-homocysteine into 5-methylthioinosine and S-inosyl-L-homocysteine, respectively. Is also able to deaminate adenosine. This chain is 5-methylthioadenosine/S-adenosylhomocysteine deaminase, found in Symbiobacterium thermophilum (strain DSM 24528 / JCM 14929 / IAM 14863 / T).